The following is a 756-amino-acid chain: Xylosyl- and glucuronyltransferase LARGE1 (756 aa).

At methionine 1–lysine 10 the chain is on the cytoplasmic side. Residues phenylalanine 11–serine 31 form a helical; Signal-anchor for type II membrane protein membrane-spanning segment. The Lumenal portion of the chain corresponds to glycine 32 to serine 756. Disordered regions lie at residues serine 43 to methionine 69 and arginine 81 to glycine 109. Over residues proline 44–serine 58 the composition is skewed to polar residues. Residues arginine 53 to arginine 95 adopt a coiled-coil conformation. The segment covering glutamine 59 to methionine 69 has biased composition (basic and acidic residues). Residues asparagine 97, asparagine 122, and asparagine 148 are each glycosylated (N-linked (GlcNAc...) asparagine). The tract at residues isoleucine 138 to arginine 413 is xylosyltransferase activity. Residues aspartate 242 and aspartate 244 each coordinate Mn(2+). Asparagine 272 is a glycosylation site (N-linked (GlcNAc...) asparagine). Residues arginine 414–serine 756 form a glucuronyltransferase activity region. Residues aspartate 563 and aspartate 565 each coordinate Mn(2+).

In the C-terminal section; belongs to the glycosyltransferase 49 family. This sequence in the N-terminal section; belongs to the glycosyltransferase 8 family. Interacts with DAG1 (via the N-terminal domain of alpha-DAG1); the interaction increases binding of DAG1 to laminin. Interacts with B4GAT1. It depends on Mn(2+) as a cofactor. Ubiquitous. Highest expression in heart, brain and skeletal muscle.

Its subcellular location is the golgi apparatus membrane. It catalyses the reaction 3-O-[beta-D-GlcA-(1-&gt;3)-beta-D-Xyl-(1-&gt;4)-Rib-ol-P-Rib-ol-P-3-beta-D-GalNAc-(1-&gt;3)-beta-D-GlcNAc-(1-&gt;4)-(O-6-P-alpha-D-Man)]-Thr-[protein] + UDP-alpha-D-xylose = 3-O-[alpha-D-Xyl-(1-&gt;3)-beta-D-GlcA-(1-&gt;4)-beta-D-Xyl-(1-&gt;4)-Rib-ol-P-Rib-ol-P-3-beta-D-GalNAc-(1-&gt;3)-beta-D-GlcNAc-(1-&gt;4)-(O-6-P-alpha-D-Man)]-Thr-[protein] + UDP + H(+). It carries out the reaction 3-O-{(1-&gt;[3)-alpha-D-Xyl-(1-&gt;3)-beta-D-GlcA-(1-&gt;](n)-4)-beta-D-Xyl-(1-&gt;4)-Rib-ol-P-Rib-ol-P-3-beta-D-GalNAc-(1-&gt;3)-beta-D-GlcNAc-(1-&gt;4)-O-6-P-alpha-D-Man}-L-Thr-[protein] + UDP-alpha-D-glucuronate = 3-O-{beta-D-GlcA-(1-&gt;[3)-alpha-D-Xyl-(1-&gt;3)-beta-D-GlcA-(1-&gt;](n)-4)-beta-D-Xyl-(1-&gt;4)-Rib-ol-P-Rib-ol-P-3-beta-D-GalNAc-(1-&gt;3)-beta-D-GlcNAc-(1-&gt;4)-O-6-P-alpha-D-Man}-L-Thr-[protein] + UDP + H(+). The catalysed reaction is 3-O-{beta-D-GlcA-(1-&gt;[3)-alpha-D-Xyl-(1-&gt;3)-beta-D-GlcA-(1-&gt;](n)-4)-beta-D-Xyl-(1-&gt;4)-Rib-ol-P-Rib-ol-P-3-beta-D-GalNAc-(1-&gt;3)-beta-D-GlcNAc-(1-&gt;4)-O-6-P-alpha-D-Man}-L-Thr-[protein] + UDP-alpha-D-xylose = 3-O-{(1-&gt;[3)-alpha-D-Xyl-(1-&gt;3)-beta-D-GlcA-(1-&gt;](n+1)-4)-beta-D-Xyl-(1-&gt;4)-Rib-ol-P-Rib-ol-P-3-beta-D-GalNAc-(1-&gt;3)-beta-D-GlcNAc-(1-&gt;4)-O-6-P-alpha-D-Man}-L-Thr-[protein] + UDP + H(+). It functions in the pathway protein modification; protein glycosylation. Functionally, bifunctional glycosyltransferase with both alpha-1,3-xylosyltransferase and beta-1,3-glucuronyltransferase activities involved in the maturation of alpha-dystroglycan (DAG1) by glycosylation leading to DAG1 binding to laminin G-like domain-containing extracellular proteins with high affinity. Elongates the glucuronyl-beta-1,4-xylose-beta disaccharide primer structure initiated by B4GAT1 by adding repeating units [-3-Xylose-alpha-1,3-GlcA-beta-1-] to produce a heteropolysaccharide. Requires the phosphorylation of core M3 (O-mannosyl trisaccharide) by POMK to elongate the glucuronyl-beta-1,4-xylose-beta disaccharide primer. Plays a key role in skeletal muscle function and regeneration. This Homo sapiens (Human) protein is Xylosyl- and glucuronyltransferase LARGE1.